Consider the following 409-residue polypeptide: uncharacterized protein (409 aa).

A run of 10 helical transmembrane segments spans residues 18 to 38, 47 to 67, 100 to 120, 159 to 179, 180 to 200, 232 to 252, 260 to 280, 302 to 322, 355 to 375, and 380 to 400; these read ALSA…ADVV, GPLL…TGVG, VVTV…ALVI, VGAM…GNAY, APAL…LLWL, FWLY…FGLL, GVLA…ADAL, ILSI…VVIG, GVFA…IGWL, and IGTL…MMFA.

It localises to the cell membrane. This is an uncharacterized protein from Mycobacterium tuberculosis (strain CDC 1551 / Oshkosh).